A 475-amino-acid chain; its full sequence is MENAMSKTLYDKHIDSHTIKELDNEGNVLLYIDRTILNEYTSPQAFSGLREENRDVWNKKSILLNVDHVNPTRPVRDANMTDPGGTLQVNYFRENSKLFDIELFDVTDPRQGIEHVVAHEQGLALPGMVIAAGDSHTTTYGAFGAFGFGIGTSEIEHLLATQTLVYKKLKNMRVTLTGKLPFGTTAKDVIMALVAKIGADGATNYAIEFCGEVIDELSVEGRMTICNMAVECGARGAFMAPDEKVYEYIKGTPRAPKGEMWDLAIAEWRKLKSDNDAVFDKEIHMDCSDLEPFVTWGISPDQADVISGEVPDPNLLPEGQKRKDYQAALEYMGLEPGMKFEEIKISHAFIGSCTNGRIEDLREVAKVLKGRKIAQGVRGMIIPGSTQVRARAEAEGLAKIFIDAGFEWRQSGCSMCLAMNEDVLSPGDRCASGTNRNFAGRQGAGSRTHLMSPAMVAAAAVAGHLVDVRKFVEGD.

Residues Cys353, Cys413, and Cys416 each coordinate [4Fe-4S] cluster.

The protein belongs to the aconitase/IPM isomerase family. LeuC type 1 subfamily. In terms of assembly, heterodimer of LeuC and LeuD. [4Fe-4S] cluster is required as a cofactor.

The enzyme catalyses (2R,3S)-3-isopropylmalate = (2S)-2-isopropylmalate. It participates in amino-acid biosynthesis; L-leucine biosynthesis; L-leucine from 3-methyl-2-oxobutanoate: step 2/4. In terms of biological role, catalyzes the isomerization between 2-isopropylmalate and 3-isopropylmalate, via the formation of 2-isopropylmaleate. This is 3-isopropylmalate dehydratase large subunit 1 from Mannheimia succiniciproducens (strain KCTC 0769BP / MBEL55E).